We begin with the raw amino-acid sequence, 1086 residues long: DNA polymerase (1086 aa).

Residues 638 to 657 form a disordered region; that stretch reads STTRKPVDDVEEHSECNGFT.

It belongs to the DNA polymerase type-B family.

It carries out the reaction DNA(n) + a 2'-deoxyribonucleoside 5'-triphosphate = DNA(n+1) + diphosphate. Functionally, replicates the viral genome. Host DNA polymerases cannot substitute for the viral enzyme in this process. This chain is DNA polymerase, found in Noctuidae (owlet moths).